We begin with the raw amino-acid sequence, 145 residues long: D-aminoacyl-tRNA deacylase (145 aa).

The Gly-cisPro motif, important for rejection of L-amino acids signature appears at 137 to 138 (GP).

The protein belongs to the DTD family. As to quaternary structure, homodimer.

The protein resides in the cytoplasm. The catalysed reaction is glycyl-tRNA(Ala) + H2O = tRNA(Ala) + glycine + H(+). It catalyses the reaction a D-aminoacyl-tRNA + H2O = a tRNA + a D-alpha-amino acid + H(+). Functionally, an aminoacyl-tRNA editing enzyme that deacylates mischarged D-aminoacyl-tRNAs. Also deacylates mischarged glycyl-tRNA(Ala), protecting cells against glycine mischarging by AlaRS. Acts via tRNA-based rather than protein-based catalysis; rejects L-amino acids rather than detecting D-amino acids in the active site. By recycling D-aminoacyl-tRNA to D-amino acids and free tRNA molecules, this enzyme counteracts the toxicity associated with the formation of D-aminoacyl-tRNA entities in vivo and helps enforce protein L-homochirality. This is D-aminoacyl-tRNA deacylase from Shewanella amazonensis (strain ATCC BAA-1098 / SB2B).